The primary structure comprises 378 residues: Quinolinate synthase (378 aa).

2 residues coordinate iminosuccinate: histidine 59 and serine 80. Cysteine 125 lines the [4Fe-4S] cluster pocket. Iminosuccinate-binding positions include 151–153 (YAN) and serine 168. Cysteine 212 provides a ligand contact to [4Fe-4S] cluster. Iminosuccinate is bound by residues 238-240 (HPE) and threonine 255. Cysteine 309 is a [4Fe-4S] cluster binding site.

Belongs to the quinolinate synthase family. Type 1 subfamily. Requires [4Fe-4S] cluster as cofactor.

The protein localises to the cytoplasm. It carries out the reaction iminosuccinate + dihydroxyacetone phosphate = quinolinate + phosphate + 2 H2O + H(+). It functions in the pathway cofactor biosynthesis; NAD(+) biosynthesis; quinolinate from iminoaspartate: step 1/1. Its function is as follows. Catalyzes the condensation of iminoaspartate with dihydroxyacetone phosphate to form quinolinate. This Burkholderia pseudomallei (strain 668) protein is Quinolinate synthase.